We begin with the raw amino-acid sequence, 141 residues long: Hemoglobin subunit alpha-A (141 aa).

One can recognise a Globin domain in the interval 1 to 141 (VLSGPDKTNV…VGAVLTAKYR (141 aa)). Residue His58 participates in O2 binding. His87 serves as a coordination point for heme b.

This sequence belongs to the globin family. As to quaternary structure, heterotetramer of two alpha chains and two beta chains. As to expression, red blood cells.

Involved in oxygen transport from the lung to the various peripheral tissues. The sequence is that of Hemoglobin subunit alpha-A (HBAA) from Rhea americana (Greater rhea).